Here is a 632-residue protein sequence, read N- to C-terminus: tRNA uridine 5-carboxymethylaminomethyl modification enzyme MnmG (632 aa).

FAD contacts are provided by residues 13 to 18 (GGGHAG), Val125, and Ser180. Residue 273–287 (GPRYCPSIEDKVMRF) coordinates NAD(+). FAD is bound at residue Gln370.

The protein belongs to the MnmG family. Homodimer. Heterotetramer of two MnmE and two MnmG subunits. Requires FAD as cofactor.

The protein localises to the cytoplasm. NAD-binding protein involved in the addition of a carboxymethylaminomethyl (cmnm) group at the wobble position (U34) of certain tRNAs, forming tRNA-cmnm(5)s(2)U34. In Vibrio vulnificus (strain YJ016), this protein is tRNA uridine 5-carboxymethylaminomethyl modification enzyme MnmG.